The chain runs to 200 residues: Peptidyl-tRNA hydrolase (200 aa).

Tyr16 is a tRNA binding site. The active-site Proton acceptor is the His21. Positions 67, 69, and 115 each coordinate tRNA.

This sequence belongs to the PTH family. In terms of assembly, monomer.

The protein resides in the cytoplasm. The catalysed reaction is an N-acyl-L-alpha-aminoacyl-tRNA + H2O = an N-acyl-L-amino acid + a tRNA + H(+). Its function is as follows. Hydrolyzes ribosome-free peptidyl-tRNAs (with 1 or more amino acids incorporated), which drop off the ribosome during protein synthesis, or as a result of ribosome stalling. Catalyzes the release of premature peptidyl moieties from peptidyl-tRNA molecules trapped in stalled 50S ribosomal subunits, and thus maintains levels of free tRNAs and 50S ribosomes. In Prochlorococcus marinus (strain AS9601), this protein is Peptidyl-tRNA hydrolase.